A 229-amino-acid polypeptide reads, in one-letter code: UPF0758 protein Ppro_3582 (229 aa).

The tract at residues 1–20 (MCPGIREWPEDERPREKMLR) is disordered. Basic and acidic residues predominate over residues 7–19 (EWPEDERPREKML). Residues 107–229 (RFTSPRQVFD…YLSFVERGVL (123 aa)) form the MPN domain. Zn(2+) contacts are provided by His178, His180, and Asp191. Positions 178–191 (HNHPTGDPTPSQED) match the JAMM motif motif.

The protein belongs to the UPF0758 family.

This is UPF0758 protein Ppro_3582 from Pelobacter propionicus (strain DSM 2379 / NBRC 103807 / OttBd1).